The chain runs to 273 residues: Large ribosomal subunit protein uL2cz/uL2cy (273 aa).

Disordered stretches follow at residues 1-20 and 224-254; these read MAIHLYKTSTPSTRKGAVDS and NPVDHPHGGGEGRAPIGRKKPTTPWGYPALG.

Belongs to the universal ribosomal protein uL2 family. In terms of assembly, part of the 50S ribosomal subunit.

It localises to the plastid. The protein localises to the chloroplast. This chain is Large ribosomal subunit protein uL2cz/uL2cy (rpl2-A), found in Nuphar advena (Common spatterdock).